A 198-amino-acid chain; its full sequence is NAD(P)H dehydrogenase (quinone) (198 aa).

One can recognise a Flavodoxin-like domain in the interval 4-189; the sequence is ILVLYYSMYG…SIARYQGEYV (186 aa). FMN is bound by residues 10–15 and 78–80; these read SMYGHI and TRF. Residue Tyr-12 coordinates NAD(+). Trp-98 lines the substrate pocket. FMN is bound by residues 113–118 and His-133; that span reads STGTGG.

Belongs to the WrbA family. FMN is required as a cofactor.

It carries out the reaction a quinone + NADH + H(+) = a quinol + NAD(+). The enzyme catalyses a quinone + NADPH + H(+) = a quinol + NADP(+). The protein is NAD(P)H dehydrogenase (quinone) of Salmonella typhi.